Consider the following 345-residue polypeptide: Holliday junction branch migration complex subunit RuvB (345 aa).

The interval 1–186 is large ATPase domain (RuvB-L); it reads MSTDPDEREV…FGFTAHMDFY (186 aa). Residues leucine 25, arginine 26, glycine 67, lysine 70, threonine 71, serine 72, 133–135, arginine 176, tyrosine 186, and arginine 223 each bind ATP; that span reads EDF. Mg(2+) is bound at residue threonine 71. The segment at 187 to 257 is small ATPAse domain (RuvB-S); that stretch reads EPAELERVLV…VAKAALAVYD (71 aa). The head domain (RuvB-H) stretch occupies residues 260 to 345; sequence ELGLDRLDRA…AGANQPGLFE (86 aa). Arginine 315 and arginine 320 together coordinate DNA.

The protein belongs to the RuvB family. Homohexamer. Forms an RuvA(8)-RuvB(12)-Holliday junction (HJ) complex. HJ DNA is sandwiched between 2 RuvA tetramers; dsDNA enters through RuvA and exits via RuvB. An RuvB hexamer assembles on each DNA strand where it exits the tetramer. Each RuvB hexamer is contacted by two RuvA subunits (via domain III) on 2 adjacent RuvB subunits; this complex drives branch migration. In the full resolvosome a probable DNA-RuvA(4)-RuvB(12)-RuvC(2) complex forms which resolves the HJ.

The protein localises to the cytoplasm. The enzyme catalyses ATP + H2O = ADP + phosphate + H(+). The RuvA-RuvB-RuvC complex processes Holliday junction (HJ) DNA during genetic recombination and DNA repair, while the RuvA-RuvB complex plays an important role in the rescue of blocked DNA replication forks via replication fork reversal (RFR). RuvA specifically binds to HJ cruciform DNA, conferring on it an open structure. The RuvB hexamer acts as an ATP-dependent pump, pulling dsDNA into and through the RuvAB complex. RuvB forms 2 homohexamers on either side of HJ DNA bound by 1 or 2 RuvA tetramers; 4 subunits per hexamer contact DNA at a time. Coordinated motions by a converter formed by DNA-disengaged RuvB subunits stimulates ATP hydrolysis and nucleotide exchange. Immobilization of the converter enables RuvB to convert the ATP-contained energy into a lever motion, pulling 2 nucleotides of DNA out of the RuvA tetramer per ATP hydrolyzed, thus driving DNA branch migration. The RuvB motors rotate together with the DNA substrate, which together with the progressing nucleotide cycle form the mechanistic basis for DNA recombination by continuous HJ branch migration. Branch migration allows RuvC to scan DNA until it finds its consensus sequence, where it cleaves and resolves cruciform DNA. The sequence is that of Holliday junction branch migration complex subunit RuvB from Mycobacterium ulcerans (strain Agy99).